Reading from the N-terminus, the 392-residue chain is Succinate--CoA ligase [ADP-forming] subunit beta (392 aa).

The ATP-grasp domain maps to 9–244; the sequence is KALLAQYGVG…LSEEESSEIE (236 aa). ATP is bound by residues Lys46, 53–55, Glu99, Leu102, and Glu107; that span reads GRG. Residues Asn199 and Asp213 each contribute to the Mg(2+) site. Residues Asn264 and 321 to 323 contribute to the substrate site; that span reads GIV.

The protein belongs to the succinate/malate CoA ligase beta subunit family. In terms of assembly, heterotetramer of two alpha and two beta subunits. Requires Mg(2+) as cofactor.

The enzyme catalyses succinate + ATP + CoA = succinyl-CoA + ADP + phosphate. It carries out the reaction GTP + succinate + CoA = succinyl-CoA + GDP + phosphate. It participates in carbohydrate metabolism; tricarboxylic acid cycle; succinate from succinyl-CoA (ligase route): step 1/1. Its function is as follows. Succinyl-CoA synthetase functions in the citric acid cycle (TCA), coupling the hydrolysis of succinyl-CoA to the synthesis of either ATP or GTP and thus represents the only step of substrate-level phosphorylation in the TCA. The beta subunit provides nucleotide specificity of the enzyme and binds the substrate succinate, while the binding sites for coenzyme A and phosphate are found in the alpha subunit. The chain is Succinate--CoA ligase [ADP-forming] subunit beta from Wolinella succinogenes (strain ATCC 29543 / DSM 1740 / CCUG 13145 / JCM 31913 / LMG 7466 / NCTC 11488 / FDC 602W) (Vibrio succinogenes).